A 277-amino-acid polypeptide reads, in one-letter code: Coiled-coil domain-containing protein 117 (277 aa).

The disordered stretch occupies residues 22–69; sequence SPPAFAGRAFPPGAAGHDLAPRPGVRGPPSSPDGRTARGRVSIHCRKK. The span at 23 to 55 shows a compositional bias: low complexity; it reads PPAFAGRAFPPGAAGHDLAPRPGVRGPPSSPDG. Position 47 is an omega-N-methylarginine (arginine 47). Residue serine 52 is modified to Phosphoserine. The segment covering 58–69 has biased composition (basic residues); the sequence is ARGRVSIHCRKK. The stretch at 139 to 166 forms a coiled coil; the sequence is QCEVARRRLQEIEDRIIDEDEEVESDRN. Disordered stretches follow at residues 216–242 and 255–277; these read LSEK…ATGT and QCTD…EMEL. Positions 225-242 are enriched in polar residues; the sequence is NPKNYMGESQTKHTATGT.

As to quaternary structure, interacts with CIAO2B; the interaction is direct. Interacts with MMS19; the interaction is indirect.

It is found in the cytoplasm. Its subcellular location is the cytoskeleton. The protein resides in the spindle. It localises to the nucleus. Functionally, facilitates DNA repair, cell cycle progression, and cell proliferation through its interaction with CIAO2B. The protein is Coiled-coil domain-containing protein 117 of Rattus norvegicus (Rat).